The primary structure comprises 722 residues: Serine/threonine-protein kinase MARK2 (722 aa).

Residues 1–46 (MSSARTPLPTLNERDTEQPTLGHLDSKPSSKSNMLRGRNSATSADE) are disordered. Over residues 27–45 (KPSSKSNMLRGRNSATSAD) the composition is skewed to polar residues. Phosphoserine is present on S40. Residues 53–304 (YRLLKTIGKG…LEQIMKDRWM (252 aa)) enclose the Protein kinase domain. Phosphothreonine; by autocatalysis is present on T58. ATP contacts are provided by residues 59 to 67 (IGKGNFAKV) and K82. Phosphoserine; by CaMK1 is present on residues S91, S92, and S93. The active-site Proton acceptor is D175. T208 bears the Phosphothreonine; by LKB1 and TAOK1 mark. Phosphoserine; by GSK3-beta is present on S212. S274 bears the Phosphoserine; by autocatalysis mark. At T275 the chain carries Phosphothreonine; by autocatalysis. Residue T294 is modified to Phosphothreonine; by CaMK1. One can recognise a UBA domain in the interval 323–362 (YKDPRRTELMVSMGYTREEIQDSLVGQRYNEVMATYLLLG). Residues 373 to 576 (ITLKPRPSAD…SQGRRGASGS (204 aa)) are disordered. Residues S408 and S409 each carry the phosphoserine modification. A compositionally biased stretch (polar residues) spans 417 to 431 (PTSNSYSKKTQSNNA). Residues 432–442 (ENKRPEEETGR) are compositionally biased toward basic and acidic residues. S453 is subject to Phosphoserine. T464 is subject to Phosphothreonine. The span at 464–483 (TPTPSTNSVLSTSTNRSRNS) shows a compositional bias: polar residues. A phosphoserine mark is found at S483 and S490. Residues 492 to 505 (GQASIQNGKDSTAP) show a composition bias toward polar residues. Residues 511 to 524 (ASPSAHNISSSSGA) are compositionally biased toward low complexity. Phosphoserine occurs at positions 512, 514, and 535. T539 carries the post-translational modification Phosphothreonine; by PKC/PRKCZ. Phosphoserine occurs at positions 562 and 656. The KA1 domain maps to 673-722 (TPGHENFVQWEMEVCKLPRLSLNGVRFKRISGTSMAFKNIASKIANELKL).

Belongs to the protein kinase superfamily. CAMK Ser/Thr protein kinase family. SNF1 subfamily. In terms of assembly, homodimer. Interacts (when phosphorylated at Thr-539) with YWHAZ. Interacts with MTCL1; the interaction is direct and increases MARK2 microtubule-binding ability. Interacts with PAK5; leading to inhibit the protein kinase activity. Interacts with MAPT/TAU. Interacts with YWHAB, YWHAG and YWHAQ. Mg(2+) serves as cofactor. Post-translationally, autophosphorylated. Phosphorylated at Thr-208 by STK11/LKB1 in complex with STE20-related adapter-alpha (STRADA) pseudo kinase and CAB39. Phosphorylation at Thr-208 by TAOK1 activates the kinase activity, leading to phosphorylation and detachment of MAPT/TAU from microtubules. Phosphorylation at Ser-212 by GSK3-beta (GSK3B) inhibits the kinase activity. Phosphorylation by CaMK1 promotes activity and is required to promote neurite outgrowth. Phosphorylation at Thr-539 by PRKCZ/aPKC in polarized epithelial cells inhibits the kinase activity and promotes binding to 14-3-3 protein YWHAZ, leading to relocation from cell membrane to cytoplasm.

The protein resides in the cell membrane. It localises to the lateral cell membrane. Its subcellular location is the cytoplasm. The protein localises to the cytoskeleton. It is found in the cell projection. The protein resides in the dendrite. The catalysed reaction is L-seryl-[protein] + ATP = O-phospho-L-seryl-[protein] + ADP + H(+). It catalyses the reaction L-threonyl-[protein] + ATP = O-phospho-L-threonyl-[protein] + ADP + H(+). The enzyme catalyses L-seryl-[tau protein] + ATP = O-phospho-L-seryl-[tau protein] + ADP + H(+). It carries out the reaction L-threonyl-[tau protein] + ATP = O-phospho-L-threonyl-[tau protein] + ADP + H(+). With respect to regulation, inhibited by hymenialdisine. Activated by phosphorylation on Thr-208 by STK11/LKB1 and TAOK1. Inhibited by phosphorylation at Ser-212 or Thr-539. Inhibited by PAK5; inhibition is independent of the kinase activity of PAK5. Its function is as follows. Serine/threonine-protein kinase. Involved in cell polarity and microtubule dynamics regulation. Phosphorylates CRTC2/TORC2, DCX, HDAC7, KIF13B, MAP2, MAP4 and RAB11FIP2. Phosphorylates the microtubule-associated protein MAPT/TAU. Plays a key role in cell polarity by phosphorylating the microtubule-associated proteins MAP2, MAP4 and MAPT/TAU at KXGS motifs, causing detachment from microtubules, and their disassembly. Regulates epithelial cell polarity by phosphorylating RAB11FIP2. Involved in the regulation of neuronal migration through its dual activities in regulating cellular polarity and microtubule dynamics, possibly by phosphorylating and regulating DCX. Regulates axogenesis by phosphorylating KIF13B, promoting interaction between KIF13B and 14-3-3 and inhibiting microtubule-dependent accumulation of KIF13B. Also required for neurite outgrowth and establishment of neuronal polarity. Regulates localization and activity of some histone deacetylases by mediating phosphorylation of HDAC7, promoting subsequent interaction between HDAC7 and 14-3-3 and export from the nucleus. Also acts as a positive regulator of the Wnt signaling pathway, probably by mediating phosphorylation of dishevelled proteins (DVL1, DVL2 and/or DVL3). Modulates the developmental decision to build a columnar versus a hepatic epithelial cell apparently by promoting a switch from a direct to a transcytotic mode of apical protein delivery. Essential for the asymmetric development of membrane domains of polarized epithelial cells. In Rattus norvegicus (Rat), this protein is Serine/threonine-protein kinase MARK2.